Consider the following 164-residue polypeptide: CASP-like protein 1C2 (164 aa).

The Cytoplasmic portion of the chain corresponds to 1–8 (MVKLTQRL). A helical membrane pass occupies residues 9-29 (GGLVLRFAAFCAALGAVIAMI). Residues 30 to 51 (TSRERSSFFVISLVAKYSDLAA) lie on the Extracellular side of the membrane. A helical membrane pass occupies residues 52–72 (FKYFVIANAIVTVYSFLVLFL). Residues 73 to 80 (PKESLLWK) lie on the Cytoplasmic side of the membrane. A helical transmembrane segment spans residues 81-101 (FVVVLDLMVTMLLTSSLSAAV). Topologically, residues 102 to 129 (AVAQVGKRGNANAGWLPICGQVPRFCDQ) are extracellular. The helical transmembrane segment at 130-150 (ITGALIAGLVALVLYVFLLIF) threads the bilayer. Residues 151 to 164 (SIHHVVDPFLLRKS) lie on the Cytoplasmic side of the membrane.

The protein belongs to the Casparian strip membrane proteins (CASP) family. Homodimer and heterodimers.

It localises to the cell membrane. In Arabidopsis thaliana (Mouse-ear cress), this protein is CASP-like protein 1C2.